The following is a 925-amino-acid chain: Glutamate receptor 3.1 (925 aa).

The signal sequence occupies residues 1–25 (MLSSMNWVLLSFIIVLGGGLLLSEG). Residues 26-591 (ASSSRPPVIK…NPWAFLRPFT (566 aa)) are Extracellular-facing. 6 N-linked (GlcNAc...) asparagine glycosylation sites follow: Asn309, Asn341, Asn359, Asn419, Asn437, and Asn488. A helical membrane pass occupies residues 592-612 (LPMWAVTASFFVIVGAAIWIL). The Cytoplasmic segment spans residues 613-621 (EHRINDEFR). The chain crosses the membrane as a helical span at residues 622–642 (GPPRRQIITILWFTFSTMFFS). Residues 643-653 (HRETTVSTLGR) are Cytoplasmic-facing. Residues 654 to 674 (MVLLIWLFVVLIITSSYTASL) traverse the membrane as a helical segment. The Extracellular segment spans residues 675-831 (TSILTVQQLN…GDSEQLNVHS (157 aa)). Residues Asn738 and Asn812 are each glycosylated (N-linked (GlcNAc...) asparagine). Residues 832-852 (FWGMFLVVGIACLVALFIHFF) form a helical membrane-spanning segment. At 853-925 (KIIRDFCKDT…ISRTASRRPI (73 aa)) the chain is on the cytoplasmic side. The segment at 897-925 (KRRLKRKRNNDHSMNANSIISRTASRRPI) is disordered. Over residues 908-919 (HSMNANSIISRT) the composition is skewed to polar residues.

Belongs to the glutamate-gated ion channel (TC 1.A.10.1) family. In terms of assembly, may form heteromers. As to expression, expressed predominantly in roots. Firt detected in the vascular tissues of the cotyledons, and later in the vasculature of all organs. In leaves, preferentially expressed in guard cells.

It is found in the membrane. Its function is as follows. Glutamate-gated receptor that probably acts as a non-selective cation channel. May be involved in light-signal transduction and calcium homeostasis via the regulation of calcium influx into cells. Required for the long-term calcium oscillation-regulated stomatal movements. This is Glutamate receptor 3.1 (GLR3.1) from Arabidopsis thaliana (Mouse-ear cress).